Here is a 240-residue protein sequence, read N- to C-terminus: E3 ubiquitin-protein ligase LubX (240 aa).

U-box domains lie at 30–103 (TTPT…QTNY) and 125–198 (EIPD…RKRE).

In terms of processing, ubiquitinated in the presence of host E1 ubiquitin-activating enzyme, E2 ubiquitin-conjugating enzyme and ubiquitin.

Its subcellular location is the secreted. It localises to the host cell. It carries out the reaction S-ubiquitinyl-[E2 ubiquitin-conjugating enzyme]-L-cysteine + [acceptor protein]-L-lysine = [E2 ubiquitin-conjugating enzyme]-L-cysteine + N(6)-ubiquitinyl-[acceptor protein]-L-lysine.. Functionally, effector proteins function to alter host cell physiology and promote bacterial survival in host tissues. This protein is an E3 ubiquitin ligase that interferes with host's ubiquitination pathway. This chain is E3 ubiquitin-protein ligase LubX (lubX), found in Legionella pneumophila (strain Paris).